Here is a 309-residue protein sequence, read N- to C-terminus: Elongation factor Ts (309 aa).

The interval 82–85 (TDFV) is involved in Mg(2+) ion dislocation from EF-Tu.

Belongs to the EF-Ts family.

Its subcellular location is the cytoplasm. Associates with the EF-Tu.GDP complex and induces the exchange of GDP to GTP. It remains bound to the aminoacyl-tRNA.EF-Tu.GTP complex up to the GTP hydrolysis stage on the ribosome. This chain is Elongation factor Ts, found in Rickettsia felis (strain ATCC VR-1525 / URRWXCal2) (Rickettsia azadi).